Reading from the N-terminus, the 442-residue chain is Putative mannan endo-1,6-alpha-mannosidase C1198.07c (442 aa).

The N-terminal stretch at 1-19 (MRYLSFFFEFFFLFSFAFA) is a signal peptide. Topologically, residues 20 to 421 (FDFDVTSDDS…TPATKSDKGW (402 aa)) are lumenal. N-linked (GlcNAc...) asparagine glycans are attached at residues asparagine 75, asparagine 124, asparagine 193, asparagine 229, asparagine 254, asparagine 257, and asparagine 356. A helical transmembrane segment spans residues 422–442 (AGFLTFAFSFVFLLFSIWLYF).

The protein belongs to the glycosyl hydrolase 76 family.

The protein resides in the endoplasmic reticulum membrane. The enzyme catalyses Random hydrolysis of (1-&gt;6)-alpha-D-mannosidic linkages in unbranched (1-&gt;6)-mannans.. In Schizosaccharomyces pombe (strain 972 / ATCC 24843) (Fission yeast), this protein is Putative mannan endo-1,6-alpha-mannosidase C1198.07c.